The chain runs to 188 residues: Peptidyl-tRNA hydrolase (188 aa).

F15 is a binding site for tRNA. The active-site Proton acceptor is the H20. Residues Y64, N66, and N112 each contribute to the tRNA site.

The protein belongs to the PTH family. Monomer.

The protein localises to the cytoplasm. The catalysed reaction is an N-acyl-L-alpha-aminoacyl-tRNA + H2O = an N-acyl-L-amino acid + a tRNA + H(+). Hydrolyzes ribosome-free peptidyl-tRNAs (with 1 or more amino acids incorporated), which drop off the ribosome during protein synthesis, or as a result of ribosome stalling. Its function is as follows. Catalyzes the release of premature peptidyl moieties from peptidyl-tRNA molecules trapped in stalled 50S ribosomal subunits, and thus maintains levels of free tRNAs and 50S ribosomes. The protein is Peptidyl-tRNA hydrolase of Borrelia turicatae (strain 91E135).